Consider the following 609-residue polypeptide: Threonine--tRNA ligase (609 aa).

The catalytic stretch occupies residues 215 to 506; the sequence is DHRIIGNEMK…LIEHTAGELP (292 aa). Zn(2+) contacts are provided by Cys-307, His-358, and His-483.

It belongs to the class-II aminoacyl-tRNA synthetase family. As to quaternary structure, homodimer. It depends on Zn(2+) as a cofactor.

It is found in the cytoplasm. It carries out the reaction tRNA(Thr) + L-threonine + ATP = L-threonyl-tRNA(Thr) + AMP + diphosphate + H(+). Catalyzes the attachment of threonine to tRNA(Thr) in a two-step reaction: L-threonine is first activated by ATP to form Thr-AMP and then transferred to the acceptor end of tRNA(Thr). Also edits incorrectly charged L-seryl-tRNA(Thr). This chain is Threonine--tRNA ligase, found in Campylobacter hominis (strain ATCC BAA-381 / DSM 21671 / CCUG 45161 / LMG 19568 / NCTC 13146 / CH001A).